The chain runs to 208 residues: Putative vomeronasal receptor-like protein 4 (208 aa).

Residues 1–19 (MEMTKLFSYIVIKNVYYPQ) are Extracellular-facing. Residues 20–40 (VSFGISANTFLLLFHIFTFAY) form a helical membrane-spanning segment. The Cytoplasmic segment spans residues 41-48 (THRLKPID). Residues 49-69 (MTISHLPLIHILLLFTQAILV) form a helical membrane-spanning segment. Residues 70 to 97 (SSDLFESWNIQNNDLKCKIITFLNRVMR) lie on the Extracellular side of the membrane. Cysteines 86 and 173 form a disulfide. A helical transmembrane segment spans residues 98–118 (GVSICTTCLLSVLQAITISPS). The Cytoplasmic segment spans residues 119 to 135 (TSFLEKFKHISANHTLG). A helical membrane pass occupies residues 136–156 (FILFSWVLNMFITNNLLLFIV). Topologically, residues 157 to 183 (PTPNRIGASLLFVTEHCYVLPMSYTHR) are extracellular. A helical membrane pass occupies residues 184–204 (SLFFILMVLRDVIFIGLMVLS). Residues 205-208 (SGYG) lie on the Cytoplasmic side of the membrane.

It belongs to the G-protein coupled receptor 1 family. As to expression, expressed in olfactory nerve.

It is found in the cell membrane. In terms of biological role, putative pheromone receptor. The polypeptide is Putative vomeronasal receptor-like protein 4 (VN1R17P) (Homo sapiens (Human)).